The sequence spans 262 residues: Serine/arginine-rich SC35-like splicing factor SCL30 (262 aa).

A compositionally biased stretch (low complexity) spans 1-14 (MRRYSPPYYSPPRR). Disordered regions lie at residues 1-48 (MRRY…SHGS) and 123-262 (ASES…VSPR). A phosphoserine mark is found at serine 5, serine 10, and serine 22. Residues 31–42 (GYGGGGGGGGRR) are compositionally biased toward gly residues. The region spanning 47–125 (GSLLVRNIPL…REITVVVASE (79 aa)) is the RRM domain. Over residues 125–152 (ESRKRPEEMRVKTRTRSREPSGSRDRSH) the composition is skewed to basic and acidic residues. The segment covering 153–167 (GRSRSRSISRSRSPR) has biased composition (basic residues). Serine 182, serine 204, and serine 206 each carry phosphoserine. Residue tyrosine 209 is modified to Phosphotyrosine. Positions 217–239 (PDRDRNGDNEIREKPGYEAEDRR) are enriched in basic and acidic residues. The span at 243–262 (RAVSRSPSGSRSRSVEVSPR) shows a compositional bias: low complexity. Residues serine 254, serine 256, and serine 260 each carry the phosphoserine modification.

It belongs to the splicing factor SR family. SCL subfamily. Component of the spliceosome. Interacts with RS2Z33, CYP59, CYP63 and CYP95. Phosphorylated.

The protein localises to the nucleus speckle. Functionally, involved in intron recognition and spliceosome assembly. Probably active at the 5' splice sites. This chain is Serine/arginine-rich SC35-like splicing factor SCL30 (SCL30), found in Arabidopsis thaliana (Mouse-ear cress).